Consider the following 350-residue polypeptide: Serine/threonine-protein kinase SRK2F (350 aa).

A Protein kinase domain is found at 4–260 (YDILRDLGSG…VPEIEKHPWF (257 aa)). Residues 10 to 18 (LGSGNFGVA) and Lys-33 each bind ATP. Residue Asp-123 is the Proton acceptor of the active site. Residues 270-303 (EEEKCDNGVEEEEEEEEKCRQSVEEIVKIIEEAR) adopt a coiled-coil conformation.

It belongs to the protein kinase superfamily. Ser/Thr protein kinase family. In terms of tissue distribution, expressed in seedlings.

The catalysed reaction is L-seryl-[protein] + ATP = O-phospho-L-seryl-[protein] + ADP + H(+). It carries out the reaction L-threonyl-[protein] + ATP = O-phospho-L-threonyl-[protein] + ADP + H(+). The sequence is that of Serine/threonine-protein kinase SRK2F (SRK2F) from Arabidopsis thaliana (Mouse-ear cress).